Here is a 445-residue protein sequence, read N- to C-terminus: MTFQNKKTLVAGLGGTGISMIAYLRKNGAEVAAYDAELKAERVAQIGKMFDGLVFYTGRLKDALDNGFDILALSPGISERQPDIEAFKQNGGRVLGDIELLADIVNRRGDKVIAITGSNGKTTVTSLVGYLCIKCGLDTVIAGNIGTPVLEAELQREGKKADVWVLELSSFQLENTESLRPTAATVMNISEDHLDRYDDLLDYAHTKAKIFRGDGVQVLNADDVFCRAMKRAGREVKRFSLEHEADFWLERGTGCLKQGNEDLISTQDIPLQGLHNAANVMAAVALCEAVGLPREALLEHVKTFQGLPHRVEKIGEKNGVVFIDDSKGTNVGATAAAIAGLQNPLFVILGGMGKGQDFTPLRDALKDKAKGVFLIGVDAPQIRRDLDGCGLNLTDCVTLEEAVQTAYAQAEAGDIVLLSPACASFDMFKGYAHRSEVFIEAFKAL.

117–123 contributes to the ATP binding site; that stretch reads GSNGKTT.

It belongs to the MurCDEF family.

Its subcellular location is the cytoplasm. The catalysed reaction is UDP-N-acetyl-alpha-D-muramoyl-L-alanine + D-glutamate + ATP = UDP-N-acetyl-alpha-D-muramoyl-L-alanyl-D-glutamate + ADP + phosphate + H(+). Its pathway is cell wall biogenesis; peptidoglycan biosynthesis. Functionally, cell wall formation. Catalyzes the addition of glutamate to the nucleotide precursor UDP-N-acetylmuramoyl-L-alanine (UMA). The polypeptide is UDP-N-acetylmuramoylalanine--D-glutamate ligase (Neisseria gonorrhoeae (strain NCCP11945)).